A 333-amino-acid polypeptide reads, in one-letter code: tRNA N6-adenosine threonylcarbamoyltransferase (333 aa).

Fe cation is bound by residues His111 and His115. Substrate contacts are provided by residues 134–138 (LVSGG), Asp167, Gly180, and Asn272. Asp300 contacts Fe cation.

It belongs to the KAE1 / TsaD family. The cofactor is Fe(2+).

It is found in the cytoplasm. The catalysed reaction is L-threonylcarbamoyladenylate + adenosine(37) in tRNA = N(6)-L-threonylcarbamoyladenosine(37) in tRNA + AMP + H(+). Its function is as follows. Required for the formation of a threonylcarbamoyl group on adenosine at position 37 (t(6)A37) in tRNAs that read codons beginning with adenine. Is involved in the transfer of the threonylcarbamoyl moiety of threonylcarbamoyl-AMP (TC-AMP) to the N6 group of A37, together with TsaE and TsaB. TsaD likely plays a direct catalytic role in this reaction. This Legionella pneumophila (strain Corby) protein is tRNA N6-adenosine threonylcarbamoyltransferase.